A 316-amino-acid chain; its full sequence is MKVLWVALVVALLAGCQADMEGELGSEEPLPPEQPRGQDSQPWEQVLGRLWDYLRWVQTLSDQVQEELLNTQVIQELTVLMEETMKEVKAYREELEGQLAPMAQETQARVSKELQAAQARLGSDMEDLRNRLAQYRSEVQAMLGQSTEELRARMASHLRKLRKRLLRDADDLKKRLAVYQAGASEGAERSVSAIRERLRPLVEQGQSRAATLSTQAAQPLLDRAEAWRQKLHGRLEEVGVRAQDRLDKMRQQLEEVRAKVEEQGSQIRLQAEAFQARLRSWFEPLVGDMQRQWAGLVEKVQLALHLSPTSPPSENH.

The first 18 residues, 1 to 18 (MKVLWVALVVALLAGCQA), serve as a signal peptide directing secretion. 8 tandem repeats follow at residues 79 to 100 (VLME…GQLA), 101 to 122 (PMAQ…ARLG), 123 to 144 (SDME…AMLG), 145 to 166 (QSTE…KRLL), 167 to 188 (RDAD…EGAE), 189 to 210 (RSVS…SRAA), 211 to 232 (TLST…QKLH), and 233 to 254 (GRLE…QQLE). The 8 X 22 AA approximate tandem repeats stretch occupies residues 79–254 (VLMEETMKEV…RLDKMRQQLE (176 aa)). Methionine sulfoxide is present on Met-142. Ser-146 is subject to Phosphoserine. The tract at residues 157–167 (HLRKLRKRLLR) is LDL and other lipoprotein receptors binding. Position 161-164 (161-164 (LRKR)) interacts with heparin. The segment at 209-289 (AATLSTQAAQ…SWFEPLVGDM (81 aa)) is lipid-binding and lipoprotein association. Thr-211 is a glycosylation site (O-linked (GalNAc...) threonine). 228 to 235 (RQKLHGRL) provides a ligand contact to heparin. The tract at residues 265 to 316 (SQIRLQAEAFQARLRSWFEPLVGDMQRQWAGLVEKVQLALHLSPTSPPSENH) is homooligomerization. The specificity for association with VLDL stretch occupies residues 277-289 (RLRSWFEPLVGDM).

The protein belongs to the apolipoprotein A1/A4/E family. Homotetramer. May interact with ABCA1; functionally associated with ABCA1 in the biogenesis of HDLs. May interact with APP/A4 amyloid-beta peptide; the interaction is extremely stable in vitro but its physiological significance is unclear. May interact with MAPT. May interact with MAP2. In the cerebrospinal fluid, interacts with secreted SORL1. Interacts with PMEL; this allows the loading of PMEL luminal fragment on ILVs to induce fibril nucleation. APOE exists as multiple glycosylated and sialylated glycoforms within cells and in plasma. The extent of glycosylation and sialylation are tissue and context specific. Post-translationally, glycated in plasma VLDL. In terms of processing, phosphorylated by FAM20C in the extracellular medium.

It localises to the secreted. The protein resides in the extracellular space. The protein localises to the extracellular matrix. It is found in the extracellular vesicle. Its subcellular location is the endosome. It localises to the multivesicular body. Functionally, APOE is an apolipoprotein, a protein associating with lipid particles, that mainly functions in lipoprotein-mediated lipid transport between organs via the plasma and interstitial fluids. APOE is a core component of plasma lipoproteins and is involved in their production, conversion and clearance. Apolipoproteins are amphipathic molecules that interact both with lipids of the lipoprotein particle core and the aqueous environment of the plasma. As such, APOE associates with chylomicrons, chylomicron remnants, very low density lipoproteins (VLDL) and intermediate density lipoproteins (IDL) but shows a preferential binding to high-density lipoproteins (HDL). It also binds a wide range of cellular receptors including the LDL receptor/LDLR and the very low-density lipoprotein receptor/VLDLR that mediate the cellular uptake of the APOE-containing lipoprotein particles. Finally, APOE also has a heparin-binding activity and binds heparan-sulfate proteoglycans on the surface of cells, a property that supports the capture and the receptor-mediated uptake of APOE-containing lipoproteins by cells. This Capra hircus aegagrus (Wild goat) protein is Apolipoprotein E (APOE).